The following is a 146-amino-acid chain: D-aminoacyl-tRNA deacylase (146 aa).

Residues 137–138 carry the Gly-cisPro motif, important for rejection of L-amino acids motif; it reads GP.

It belongs to the DTD family. As to quaternary structure, homodimer.

It is found in the cytoplasm. It catalyses the reaction glycyl-tRNA(Ala) + H2O = tRNA(Ala) + glycine + H(+). It carries out the reaction a D-aminoacyl-tRNA + H2O = a tRNA + a D-alpha-amino acid + H(+). An aminoacyl-tRNA editing enzyme that deacylates mischarged D-aminoacyl-tRNAs. Also deacylates mischarged glycyl-tRNA(Ala), protecting cells against glycine mischarging by AlaRS. Acts via tRNA-based rather than protein-based catalysis; rejects L-amino acids rather than detecting D-amino acids in the active site. By recycling D-aminoacyl-tRNA to D-amino acids and free tRNA molecules, this enzyme counteracts the toxicity associated with the formation of D-aminoacyl-tRNA entities in vivo and helps enforce protein L-homochirality. This is D-aminoacyl-tRNA deacylase from Thermodesulfovibrio yellowstonii (strain ATCC 51303 / DSM 11347 / YP87).